We begin with the raw amino-acid sequence, 459 residues long: Mitochondrial distribution and morphology protein 34 (459 aa).

Residues 1 to 190 enclose the SMP-LTD domain; sequence MSFRFNEAVF…LPSLIFNTSQ (190 aa). Residues 338–347 are compositionally biased toward basic and acidic residues; that stretch reads RSNSNDDNAK. The segment at 338-375 is disordered; the sequence is RSNSNDDNAKPRRRKIKCKKTRTPSNLQSQGEQAVDDS. Over residues 348 to 359 the composition is skewed to basic residues; the sequence is PRRRKIKCKKTR.

It belongs to the MDM34 family. Component of the ER-mitochondria encounter structure (ERMES) or MDM complex, composed of MMM1, MDM10, MDM12 and MDM34. In terms of processing, ubiquitinated by a SCF (SKP1-CUL1-F-box protein) E3 ubiquitin-protein ligase complex containing the F-box protein MDM30. Ubiquitination is important for mitochondrial integrity.

The protein localises to the mitochondrion outer membrane. Its function is as follows. Component of the ERMES/MDM complex, which serves as a molecular tether to connect the endoplasmic reticulum (ER) and mitochondria. Components of this complex are involved in the control of mitochondrial shape and protein biogenesis, and function in nonvesicular lipid trafficking between the ER and mitochondria. MDM34 is required for the interaction of the ER-resident membrane protein MMM1 and the outer mitochondrial membrane-resident beta-barrel protein MDM10. This is Mitochondrial distribution and morphology protein 34 from Saccharomyces cerevisiae (strain RM11-1a) (Baker's yeast).